We begin with the raw amino-acid sequence, 919 residues long: Hyphally regulated cell wall protein 1 (919 aa).

The signal sequence occupies residues 1 to 20 (MKVVSNFIFTILLTLNLSAA). Residue asparagine 236 is glycosylated (N-linked (GlcNAc...) asparagine). Residues 332–483 (SAPESESDLN…QSITSSPGQS (152 aa)) form a disordered region. The span at 344–392 (TTSSIETSSYSSAATESSVVSESSSAVDSLTSSSLSSKSESSDVVSSTT) shows a compositional bias: low complexity. Residues 393–414 (NIESSSTAIETTMNSESSTDAG) show a composition bias toward polar residues. Low complexity predominate over residues 415 to 475 (SSSISQSESS…SNALSSTEQS (61 aa)). Asparagine 449, asparagine 488, asparagine 580, asparagine 585, asparagine 607, asparagine 619, asparagine 631, asparagine 639, asparagine 647, and asparagine 693 each carry an N-linked (GlcNAc...) asparagine glycan. The segment covering 567 to 590 (DATTTTTTSTGGDNSTGGNESGSN) has biased composition (low complexity). A disordered region spans residues 567 to 839 (DATTTTTTST…VANPVTTSTE (273 aa)). Gly residues-rich tracts occupy residues 607-665 (NGSG…GSGS) and 675-707 (EGSG…GSGS). Positions 708–724 (QSGSESGSNSGSNEGSN) are enriched in low complexity. Residues 725 to 783 (PGAGNGSNEGSGQGSGNGSEAGSGQGSGPNNGSGSGHNDGSGSGSNQGSNPGAGSGSGS) show a composition bias toward gly residues. N-linked (GlcNAc...) asparagine glycosylation is found at asparagine 729, asparagine 741, and asparagine 755. The span at 784–798 (ESGSNAGSHSGSNEG) shows a compositional bias: low complexity. The span at 799-811 (AKTDSIEGFHTES) shows a compositional bias: basic and acidic residues. The segment covering 823-833 (ATVTGNSVANP) has biased composition (polar residues). N-linked (GlcNAc...) asparagine glycans are attached at residues asparagine 879 and asparagine 895. Asparagine 895 carries GPI-anchor amidated asparagine lipidation. A propeptide spans 896-919 (GSSIVTGGKSILFGLIVSMVVLFM) (removed in mature form).

Belongs to the HYR1/IFF family. In terms of assembly, component of a multiprotein complex of 250 kDa composed of at least HYR1, MP65, and PRA1. In terms of processing, the GPI-anchor is attached to the protein in the endoplasmic reticulum and serves to target the protein to the cell surface. There, the glucosamine-inositol phospholipid moiety is cleaved off and the GPI-modified mannoprotein is covalently attached via its lipidless GPI glycan remnant to the 1,6-beta-glucan of the outer cell wall layer.

The protein localises to the secreted. Its subcellular location is the cell wall. It is found in the membrane. GPI-anchored hyphal cell wall protein required for hyphal growth and virulence. Involved in innate immune cell evasion through conferring resistance to neutrophil killing. Binds kininogen, the proteinaceous kinin precursor, and contributes to trigger the kinin-forming cascade on the cell surface. Production of kinins is often involved in the human host defense against microbial infections. This chain is Hyphally regulated cell wall protein 1 (HYR1), found in Candida albicans (strain SC5314 / ATCC MYA-2876) (Yeast).